The primary structure comprises 163 residues: Nucleotide-binding protein HDEF_1968 (163 aa).

It belongs to the YajQ family.

Its function is as follows. Nucleotide-binding protein. The sequence is that of Nucleotide-binding protein HDEF_1968 from Hamiltonella defensa subsp. Acyrthosiphon pisum (strain 5AT).